A 317-amino-acid chain; its full sequence is 8-oxo-(d)GTP phosphatase (317 aa).

A Nudix hydrolase domain is found at 15-148; the sequence is RIVYAAGAVL…DRKVLCRFAK (134 aa). Residues 43–46, D48, and 53–55 each bind substrate; these read RPRY and KGK. Residues K53, E69, and E73 each coordinate Mg(2+). The Nudix box motif lies at 54–75; that stretch reads GKVDPGETAPVGAVREILEETG. Residues Y89, K99, E118, and Y136 each contribute to the substrate site. Residue E118 coordinates Mg(2+).

It belongs to the Nudix hydrolase family. Mg(2+) is required as a cofactor.

It catalyses the reaction 8-oxo-dGTP + H2O = 8-oxo-dGDP + phosphate + H(+). The enzyme catalyses 8-oxo-GTP + H2O = 8-oxo-GDP + phosphate + H(+). Its function is as follows. Catalyzes the conversion of 8-oxo-dGTP to 8-oxo-dGDP, and 8-oxo-GTP to 8-oxo-GDP. The protein is 8-oxo-(d)GTP phosphatase of Mycobacterium tuberculosis (strain CDC 1551 / Oshkosh).